Consider the following 364-residue polypeptide: uncharacterized protein (364 aa).

Residues 1–17 are compositionally biased toward acidic residues; that stretch reads MEPGELMEVDTSQELDE. The interval 1–61 is disordered; the sequence is MEPGELMEVD…EEDQSSTETM (61 aa). Positions 19 to 31 are enriched in basic and acidic residues; that stretch reads TSAKETDQPKDAQ.

This is an uncharacterized protein from Caenorhabditis elegans.